Reading from the N-terminus, the 179-residue chain is uncharacterized protein (179 aa).

A helical transmembrane segment spans residues 5–25; that stretch reads MLAGIGIGVAAALGVAAVASL.

The protein to Rickettsia 17 kDa surface antigen.

Its subcellular location is the membrane. This is an uncharacterized protein from Escherichia coli O6:H1 (strain CFT073 / ATCC 700928 / UPEC).